The sequence spans 547 residues: Rho GTPase-activating protein 36 (547 aa).

An N-terminal signal peptide occupies residues 1-40 (MGGCNPFLKAARTLCPRIMPPLLFLSAFIFLVNVLGGAPG). A Rho-GAP domain is found at 226-426 (MSLNPIAKQI…AMIDNWDILF (201 aa)). The tract at residues 493 to 547 (FDEGSSEEPAVPPGTAHSHDDEEGAGNPPIPEQDRPLLRVPREKQAKTGIGYFFP) is disordered. The segment covering 524–538 (EQDRPLLRVPREKQA) has biased composition (basic and acidic residues).

Its function is as follows. GTPase activator for the Rho-type GTPases by converting them to an inactive GDP-bound state. The polypeptide is Rho GTPase-activating protein 36 (ARHGAP36) (Ailuropoda melanoleuca (Giant panda)).